Consider the following 155-residue polypeptide: UPF0461 protein C5orf24 homolog (155 aa).

Residues 1–10 (MMHPVASSNP) show a composition bias toward polar residues. The tract at residues 1–20 (MMHPVASSNPAFCGPGKPSC) is disordered. Position 37 is a phosphoserine (Ser37). Residues 40–155 (SKYSHTVNHK…QQAFRCSSDA (116 aa)) are disordered. Positions 57 to 70 (DPLNETHLQTTSGR) are enriched in polar residues. A Glycyl lysine isopeptide (Lys-Gly) (interchain with G-Cter in SUMO2) cross-link involves residue Lys75. The span at 80-92 (KKKNLNRSGKRGR) shows a compositional bias: basic residues. A compositionally biased stretch (polar residues) spans 94 to 107 (SGTTKSAGYRTSTG). Ser121 carries the phosphoserine modification.

This sequence belongs to the UPF0461 family.

This Pongo abelii (Sumatran orangutan) protein is UPF0461 protein C5orf24 homolog.